The primary structure comprises 277 residues: Sulfur carrier protein FdhD (277 aa).

Residue cysteine 121 is the Cysteine persulfide intermediate of the active site. 260–265 (FCKPGR) provides a ligand contact to Mo-bis(molybdopterin guanine dinucleotide).

It belongs to the FdhD family.

The protein resides in the cytoplasm. In terms of biological role, required for formate dehydrogenase (FDH) activity. Acts as a sulfur carrier protein that transfers sulfur from IscS to the molybdenum cofactor prior to its insertion into FDH. The chain is Sulfur carrier protein FdhD from Shigella dysenteriae serotype 1 (strain Sd197).